The primary structure comprises 218 residues: Small ribosomal subunit protein uS3c (218 aa).

Positions 47 to 118 constitute a KH type-2 domain; that stretch reads VQKNMKTSSG…KLNIAITRIE (72 aa).

The protein belongs to the universal ribosomal protein uS3 family. In terms of assembly, part of the 30S ribosomal subunit.

It localises to the plastid. It is found in the chloroplast. The polypeptide is Small ribosomal subunit protein uS3c (rps3) (Helianthus annuus (Common sunflower)).